We begin with the raw amino-acid sequence, 427 residues long: Flotillin-1 (427 aa).

A phosphoserine mark is found at Ser19, Ser163, and Ser385. A Phosphothreonine modification is found at Thr387.

Belongs to the band 7/mec-2 family. Flotillin subfamily. Heterooligomeric complex of flotillin-1 and flotillin-2 and caveolin-1 and caveolin-2. Interacts with ECPAS.

It localises to the cell membrane. It is found in the endosome. The protein localises to the membrane. The protein resides in the caveola. Its subcellular location is the melanosome. It localises to the membrane raft. Functionally, may act as a scaffolding protein within caveolar membranes, functionally participating in formation of caveolae or caveolae-like vesicles. The chain is Flotillin-1 (FLOT1) from Pongo abelii (Sumatran orangutan).